A 245-amino-acid polypeptide reads, in one-letter code: Terpene cyclase prhH (245 aa).

Transmembrane regions (helical) follow at residues 17–37 (ILAI…VNYI), 51–71 (IGIL…WMFP), 76–96 (HWQG…LVTL), 113–133 (IVFI…ALAA), 138–158 (ALGF…CGIA), 170–190 (SYLI…KLCI), and 205–225 (PMCW…PFLY).

It belongs to the paxB family.

The protein resides in the membrane. It participates in secondary metabolite biosynthesis; terpenoid biosynthesis. In terms of biological role, terpene cyclase; part of the gene cluster that mediates the biosynthesis of paraherquonin, a meroterpenoid with a unique, highly congested hexacyclic molecular architecture. The first step of the pathway is the synthesis of 3,5-dimethylorsellinic acid (DMOA) by the polyketide synthase prhL. Synthesis of DMOA is followed by farnesylation by the prenyltransferase prhE, methylesterification by the methyl-transferase prhM, epoxidation of the prenyl chain by the flavin-dependent monooxygenase prhF, and cyclization of the farnesyl moiety by the terpene cyclase prhH, to yield the tetracyclic intermediate, protoaustinoid A. The short chain dehydrogenase prhI then oxidizes the C-3 alcohol group of the terpene cyclase product to transform protoaustinoid A into protoaustinoid B. The FAD-binding monooxygenase prhJ catalyzes the oxidation of protoaustinoid B into preaustinoid A which is further oxidized into preaustinoid A1 by FAD-binding monooxygenase phrK. Finally, prhA leads to berkeleydione via the berkeleyone B intermediate. PrhA is a multifunctional dioxygenase that first desaturates at C5-C6 to form berkeleyone B, followed by rearrangement of the A/B-ring to form the cycloheptadiene moiety in berkeleydione. Berkeleydione serves as the key intermediate for the biosynthesis of paraherquonin as well as many other meroterpenoids. The cytochrome P450 monooxygenases prhB, prhD, and prhN, as well as the isomerase prhC, are probably involved in the late stage of paraherquonin biosynthesis, after the production of berkeleydione. Especially prhC might be a multifunctional enzyme that catalyzes the D-ring expansion via intramolecular methoxy rearrangement, as well as the hydrolysis of the expanded D-ring. In Penicillium brasilianum, this protein is Terpene cyclase prhH.